The chain runs to 317 residues: MALENLLHPTNIKIDEYAKNATKFSFEALERGVGYTLGFALKQTMLYSIAGACVTSIKINDGKVTSLEDVIPCDETVADIILNVKSLSVTLAEDVETGTITFELSGSEEEIFSEEAKLSEGLAITEEVFICSYNGGKKLKIEAKVEKGVGFRPAQDNFKDGEFLLDATFSPVVFCDFEIKDARVGRRTDLDKLELNIKTNGNVNCEEALRLAATKIQNQLRNIVDIEEINKGIFVEDPKDINPILLKHVEELNLTARSSNCLKAVNIRLIGELVQKTENELLKAPNFGKKSLTEIKDKLSELGLSLGTLIENWPQDL.

Positions 1-227 (MALENLLHPT…NQLRNIVDIE (227 aa)) are alpha N-terminal domain (alpha-NTD). Residues 241-317 (INPILLKHVE…TLIENWPQDL (77 aa)) form an alpha C-terminal domain (alpha-CTD) region.

The protein belongs to the RNA polymerase alpha chain family. As to quaternary structure, homodimer. The RNAP catalytic core consists of 2 alpha, 1 beta, 1 beta' and 1 omega subunit. When a sigma factor is associated with the core the holoenzyme is formed, which can initiate transcription.

It carries out the reaction RNA(n) + a ribonucleoside 5'-triphosphate = RNA(n+1) + diphosphate. In terms of biological role, DNA-dependent RNA polymerase catalyzes the transcription of DNA into RNA using the four ribonucleoside triphosphates as substrates. In Francisella tularensis subsp. holarctica (strain LVS), this protein is DNA-directed RNA polymerase subunit alpha 2.